We begin with the raw amino-acid sequence, 170 residues long: Transcription factor E (170 aa).

Residues 1–93 (MKDVYLYIVE…TWYVDDEIIK (93 aa)) enclose the HTH TFE/IIEalpha-type domain.

This sequence belongs to the TFE family. In terms of assembly, monomer. Interaction with RNA polymerase subunits RpoF and RpoE is necessary for Tfe stimulatory transcription activity. Able to interact with Tbp and RNA polymerase in the absence of DNA promoter. Interacts both with the preinitiation and elongation complexes.

In terms of biological role, transcription factor that plays a role in the activation of archaeal genes transcribed by RNA polymerase. Facilitates transcription initiation by enhancing TATA-box recognition by TATA-box-binding protein (Tbp), and transcription factor B (Tfb) and RNA polymerase recruitment. Not absolutely required for transcription in vitro, but particularly important in cases where Tbp or Tfb function is not optimal. It dynamically alters the nucleic acid-binding properties of RNA polymerases by stabilizing the initiation complex and destabilizing elongation complexes. Seems to translocate with the RNA polymerase following initiation and acts by binding to the non template strand of the transcription bubble in elongation complexes. In Pyrobaculum aerophilum (strain ATCC 51768 / DSM 7523 / JCM 9630 / CIP 104966 / NBRC 100827 / IM2), this protein is Transcription factor E.